A 77-amino-acid polypeptide reads, in one-letter code: Dermatoxin-DA1 (77 aa).

Positions Met1–Cys22 are cleaved as a signal peptide. The propeptide occupies Glu23–Glu42. Lys76 bears the Lysine amide mark.

It belongs to the frog skin active peptide (FSAP) family. Dermatoxin subfamily. Expressed by the skin glands.

It localises to the secreted. Its function is as follows. Possesses a potent antimicrobial activity against Gram-positive and Gram-negative bacteria. Probably acts by disturbing membrane functions with its amphipathic structure. This Agalychnis dacnicolor (Giant Mexican leaf frog) protein is Dermatoxin-DA1.